Consider the following 229-residue polypeptide: Coiled-coil domain-containing protein 134 (229 aa).

An N-terminal signal peptide occupies residues 1–22; sequence MDPVQLLSFLLALLLPLGTALD. Positions 192–218 form a coiled coil; sequence NTDAFQKALREEEKRRRKEEKRKEIRK. Positions 201 to 229 are disordered; the sequence is REEEKRRRKEEKRKEIRKGPRITRSRSEL. The segment covering 219-229 has biased composition (basic residues); that stretch reads GPRITRSRSEL. Positions 226–229 match the Prevents secretion from ER motif; that stretch reads RSEL.

The protein belongs to the CCDC134 family.

The protein resides in the endoplasmic reticulum lumen. Molecular adapter required to prevent protein hyperglycosylation of HSP90B1: during translation, associates with nascent HSP90B1 and the STT3A catalytic component of the OST-A complex and tethers them to a specialized translocon that forms a microenvironment for HSP90B1 folding. In the CCDC134-containing translocon, STT3A associates with the SRT pseudosubstrate motif of HSP90B1, preventing access to facultative glycosylation sites until folding is completed, preventing hyperglycosylation and subsequent degradation of HSP90B1. This Xenopus tropicalis (Western clawed frog) protein is Coiled-coil domain-containing protein 134 (ccdc134).